A 116-amino-acid chain; its full sequence is Ribosome-binding factor A (116 aa).

It belongs to the RbfA family. In terms of assembly, monomer. Binds 30S ribosomal subunits, but not 50S ribosomal subunits or 70S ribosomes.

It is found in the cytoplasm. Its function is as follows. One of several proteins that assist in the late maturation steps of the functional core of the 30S ribosomal subunit. Associates with free 30S ribosomal subunits (but not with 30S subunits that are part of 70S ribosomes or polysomes). Required for efficient processing of 16S rRNA. May interact with the 5'-terminal helix region of 16S rRNA. The protein is Ribosome-binding factor A of Buchnera aphidicola subsp. Cinara cedri (strain Cc).